The sequence spans 297 residues: Probable esterase afoC (297 aa).

S136 (charge relay system) is an active-site residue. Residues A204–S217 show a composition bias toward low complexity. A disordered region spans residues A204–H226. Residues D240 and H267 each act as charge relay system in the active site.

It belongs to the LovG family.

In terms of biological role, probable esterase; part of the gene cluster that mediates the biosynthesis of asperfuranone, a probable antitumor agent. The polyketide synthase afoG is responsible for producing the 3,5-dimethyloctadienone moiety from acetyl-CoA, three malonyl-CoA, and two S-adenosyl methionines (SAM). The 3,5-dimethyloctadienone moiety is then loaded onto the SAT domain of afoE and extended with four malonyl-CoA and one SAM, which leads to the formation of 2,4-dihydroxy-6-(5,7-dimethyl-2-oxo-trans-3-trans-5-nonadienyl)-3-methylbenzaldehyde (compound 2) after reductive release and aldol condensation. AfoD is the next enzyme in the biosynthesis sequence and hydroxylates the side chain at the benzylic position of compound 2. After benzylic hydroxylation, a furan ring is formed after five-member ring hemiacetal formation and water elimination. AfoF and afoC are proposed to oxidize the R-diketone proton and to reduce the unconjugated carbonyl group, respectively, to generate asperfuranone. Since no intermediates could be isolated from afoF and afoC deletants, the sequence of these two enzymes is not fully understood. Moreover, since afoC deletant still produces a small amount of asperfuranone, other endogenous oxidoreductases might catalyze the same reaction with much less efficiency. The polypeptide is Probable esterase afoC (Emericella nidulans (strain FGSC A4 / ATCC 38163 / CBS 112.46 / NRRL 194 / M139) (Aspergillus nidulans)).